A 700-amino-acid chain; its full sequence is Elongation factor G 2 (700 aa).

The region spanning 8-290 (ERYRNIGISA…AVLDFLPSPI (283 aa)) is the tr-type G domain. Residues 17 to 24 (AHIDAGKT), 88 to 92 (DTPGH), and 142 to 145 (NKMD) contribute to the GTP site.

This sequence belongs to the TRAFAC class translation factor GTPase superfamily. Classic translation factor GTPase family. EF-G/EF-2 subfamily.

Its subcellular location is the cytoplasm. Catalyzes the GTP-dependent ribosomal translocation step during translation elongation. During this step, the ribosome changes from the pre-translocational (PRE) to the post-translocational (POST) state as the newly formed A-site-bound peptidyl-tRNA and P-site-bound deacylated tRNA move to the P and E sites, respectively. Catalyzes the coordinated movement of the two tRNA molecules, the mRNA and conformational changes in the ribosome. This is Elongation factor G 2 from Paraburkholderia xenovorans (strain LB400).